Here is a 625-residue protein sequence, read N- to C-terminus: Interferon-induced GTP-binding protein MxE (625 aa).

The 274-residue stretch at 40–313 (DLNLPAIAVI…LVEHIAKNLP (274 aa)) folds into the Dynamin-type G domain. The segment at 50 to 57 (GDQSSGKS) is G1 motif. Position 50-57 (50-57 (GDQSSGKS)) interacts with GTP. Positions 75–77 (VTR) are G2 motif. The G3 motif stretch occupies residues 151–154 (DLPG). GTP contacts are provided by residues 151 to 155 (DLPGI) and 220 to 223 (TKPD). The G4 motif stretch occupies residues 220–223 (TKPD). The tract at residues 252–255 (KCRG) is G5 motif. Positions 536-625 (VREMAYHLTS…RVLSKFVHSA (90 aa)) constitute a GED domain.

The protein belongs to the TRAFAC class dynamin-like GTPase superfamily. Dynamin/Fzo/YdjA family.

It is found in the cytoplasm. The polypeptide is Interferon-induced GTP-binding protein MxE (mxe) (Danio rerio (Zebrafish)).